A 63-amino-acid polypeptide reads, in one-letter code: Conotoxin Pn-B01411 (63 aa).

Positions 1–22 are cleaved as a signal peptide; that stretch reads MRCFPVFIILLLLMASAPSFDA. Positions 23 to 49 are excised as a propeptide; the sequence is RPKTEDDVPLSSFRDNLKRTLRTLLDP. Ile62 carries the post-translational modification Isoleucine amide.

The protein belongs to the conotoxin T superfamily. In terms of processing, contains 2 disulfide bonds that can be either 'C1-C3, C2-C4' or 'C1-C4, C2-C3', since these disulfide connectivities have been observed for conotoxins with cysteine framework V (for examples, see AC P0DQQ7 and AC P81755). As to expression, expressed by the venom duct.

The protein resides in the secreted. The polypeptide is Conotoxin Pn-B01411 (Conus pennaceus (Feathered cone)).